Consider the following 241-residue polypeptide: MRSGVIAQKVGMTRVFTEAGEHIPVTVLKLGNCQVVAHRTTEKNGYVALQLGSGARKTVYMPKAERGQFAVAKVEPKRKVAEFRVSEDALIPVGAEIQADHFVVGQFVDVTGTSTGKGFAGGMKRWNFGGLRATHGVSVSHRSIGSTGGRQDPGKTFKNKKMPGHMGVDRITTLNLRVVQTDVERGLILVEGAVPGSKGGWISVRDAVKKALPADAPKPGKFRLANGGDEVAAPAAEQEGA.

Disordered regions lie at residues 139 to 164 (VSHR…KMPG) and 215 to 241 (DAPK…QEGA). Q151 bears the N5-methylglutamine mark.

It belongs to the universal ribosomal protein uL3 family. In terms of assembly, part of the 50S ribosomal subunit. Forms a cluster with proteins L14 and L19. In terms of processing, methylated by PrmB.

Functionally, one of the primary rRNA binding proteins, it binds directly near the 3'-end of the 23S rRNA, where it nucleates assembly of the 50S subunit. This is Large ribosomal subunit protein uL3 from Rhodopseudomonas palustris (strain BisB5).